The chain runs to 348 residues: MTQKLVTKPFIEVISGKRQASPPMWMMRQAGRYLPEYRATRTEAGSFLDLCFNPKLAAEVTLQPIRRFGFDAAIIFSDILVVPYALGRAVRFEVGEGPRLDPLNSPDLVGTLNGAIDLGKLEPVFEALRIVRSELAPETTLIGFCGAPFTVATYMVAGQGTSDQHPARLMAYQHPGAFAKIIDVLVESSIQYLLKQLEAGADVLQIFDTWGGILPPREFEKWCIEPTRRIVEGVRKVKPDAKIIGFPRGAGALLPAFIERTGVDAVSIDWTAEPKMVRDQVQTKVAVQGNLDPLLLIAGGSALDQGVDDVLKNFSAGRHIFNLGHGITPDASIAHVEQMVKRVRAFRG.

Residues 28-32 (RQAGR), Asp-78, Tyr-154, Thr-209, and His-325 each bind substrate.

This sequence belongs to the uroporphyrinogen decarboxylase family. As to quaternary structure, homodimer.

It localises to the cytoplasm. The catalysed reaction is uroporphyrinogen III + 4 H(+) = coproporphyrinogen III + 4 CO2. Its pathway is porphyrin-containing compound metabolism; protoporphyrin-IX biosynthesis; coproporphyrinogen-III from 5-aminolevulinate: step 4/4. In terms of biological role, catalyzes the decarboxylation of four acetate groups of uroporphyrinogen-III to yield coproporphyrinogen-III. The protein is Uroporphyrinogen decarboxylase of Rhodopseudomonas palustris (strain BisB5).